The chain runs to 270 residues: Transcription factor PU.1 (270 aa).

The tract at residues 124–162 is disordered; that stretch reads LSPAQPSSDEEEGERQSPPLEVSDGEADGLEPGPGLLHG. A phosphoserine mark is found at Ser140 and Ser146. Low complexity predominate over residues 153–162; it reads LEPGPGLLHG. The segment at residues 170–253 is a DNA-binding region (ETS); it reads IRLYQFLLDL…VKKKLTYQFS (84 aa). Positions 217, 230, 233, and 243 each coordinate DNA.

The protein belongs to the ETS family. As to quaternary structure, binds DNA as a monomer. Can form homomers. Directly interacts with CEBPD/NF-IL6-beta; this interaction does not affect DNA-binding properties of each partner. Interacts with NONO/p54(nrb). Interacts with RUNX1/AML1. Interacts with GFI1; the interaction represses SPI1 transcriptional activity, hence blocks SPI1-induced macrophage differentiation of myeloid progenitor cells. Interacts with CEBPE. Interacts with IRF4/Pip and IRF8. Interacts with JUN. Interacts with RB1. Interacts with TBP.

The protein localises to the nucleus. With respect to regulation, transcriptional activity at macrophage-specific genes is inhibited by interaction with GFI1, which results in the inhibition of SPI1-induced macrophage differentiation of myeloid progenitor cells, but not that of the granulocyte lineage. Pioneer transcription factor, which controls hematopoietic cell fate by decompacting stem cell heterochromatin and allowing other transcription factors to enter otherwise inaccessible genomic sites. Once in open chromatin, can directly control gene expression by binding genetic regulatory elements and can also more broadly influence transcription by recruiting transcription factors, such as interferon regulatory factors (IRFs), to otherwise inaccessible genomic regions. Transcriptionally activates genes important for myeloid and lymphoid lineages, such as CSF1R. Transcriptional activation from certain promoters, possibly containing low affinity binding sites, is achieved cooperatively with other transcription factors. FCER1A transactivation is achieved in cooperation with GATA1. May be particularly important for the pro- to pre-B cell transition. Binds (via the ETS domain) onto the purine-rich DNA core sequence 5'-GAGGAA-3', also known as the PU-box. In vitro can bind RNA and interfere with pre-mRNA splicing. This chain is Transcription factor PU.1 (SPI1), found in Sus scrofa (Pig).